The sequence spans 479 residues: MQFNNTWLNELNGFHTTLRPMPLKNARLLYYSAELAQDLGLDERLFDAQNVGLWSGERLAEGMQPLAQVYSGHQFGVWAGQLGDGRGLLLGEQQLPDGRKFDWHLKGAGLTPYSRMGDGRAVLRSTLREFLAGEAMYHLGIPTSRALTVVTSDEPVYRETTEAGAMLLRVAESHVRFGHFEHYYYQGQTEKVTQLADYVIRHHWPELVQEKDRYLLWFSDVVQRTARMIAGWQSVGFAHGVMNTDNMSILGLTFDYGPYGFLDDYRPDLICNHSDHQGRYSFENQPMIGLWNLNRLAHALSGLMSPQQLKQALAGYEPELMRCWGEKMRAKLGLLTPAKDDNNILTGLLSLMTKEGSDYTRTFRQLSQSEQLQLRSPMRDEFIDRDAFDSWYNVWRQRVLQEERSDEERQQTMKLANPALVLRNYLAQQAIERAEQDDISVLARLHQALSRPFDDAPEYADLAQRPPDWGKKLEVSCSS.

8 residues coordinate ATP: G83, G85, R86, K106, D118, G119, R169, and R176. Residue D245 is the Proton acceptor of the active site. The Mg(2+) site is built by N246 and D255. D255 provides a ligand contact to ATP.

Belongs to the SELO family. The cofactor is Mg(2+). It depends on Mn(2+) as a cofactor.

The catalysed reaction is L-seryl-[protein] + ATP = 3-O-(5'-adenylyl)-L-seryl-[protein] + diphosphate. It carries out the reaction L-threonyl-[protein] + ATP = 3-O-(5'-adenylyl)-L-threonyl-[protein] + diphosphate. It catalyses the reaction L-tyrosyl-[protein] + ATP = O-(5'-adenylyl)-L-tyrosyl-[protein] + diphosphate. The enzyme catalyses L-histidyl-[protein] + UTP = N(tele)-(5'-uridylyl)-L-histidyl-[protein] + diphosphate. The catalysed reaction is L-seryl-[protein] + UTP = O-(5'-uridylyl)-L-seryl-[protein] + diphosphate. It carries out the reaction L-tyrosyl-[protein] + UTP = O-(5'-uridylyl)-L-tyrosyl-[protein] + diphosphate. Functionally, nucleotidyltransferase involved in the post-translational modification of proteins. It can catalyze the addition of adenosine monophosphate (AMP) or uridine monophosphate (UMP) to a protein, resulting in modifications known as AMPylation and UMPylation. This is Protein nucleotidyltransferase YdiU from Erwinia tasmaniensis (strain DSM 17950 / CFBP 7177 / CIP 109463 / NCPPB 4357 / Et1/99).